We begin with the raw amino-acid sequence, 314 residues long: tRNA pseudouridine synthase B (314 aa).

His-43 provides a ligand contact to substrate. Asp-48 serves as the catalytic Nucleophile. Substrate is bound by residues Tyr-76, Tyr-179, and Leu-200.

Belongs to the pseudouridine synthase TruB family. Type 1 subfamily.

The catalysed reaction is uridine(55) in tRNA = pseudouridine(55) in tRNA. Its function is as follows. Responsible for synthesis of pseudouridine from uracil-55 in the psi GC loop of transfer RNAs. This chain is tRNA pseudouridine synthase B, found in Cronobacter sakazakii (strain ATCC BAA-894) (Enterobacter sakazakii).